The sequence spans 84 residues: Small ribosomal subunit protein uS17 (84 aa).

Belongs to the universal ribosomal protein uS17 family. As to quaternary structure, part of the 30S ribosomal subunit.

Functionally, one of the primary rRNA binding proteins, it binds specifically to the 5'-end of 16S ribosomal RNA. The protein is Small ribosomal subunit protein uS17 of Borrelia garinii subsp. bavariensis (strain ATCC BAA-2496 / DSM 23469 / PBi) (Borreliella bavariensis).